Reading from the N-terminus, the 391-residue chain is Phosphoglycerate kinase (391 aa).

Residues 21–23 (DLN), R36, 59–62 (HLGR), R113, and R146 contribute to the substrate site. ATP contacts are provided by residues K197, E319, and 345–348 (GGDT).

Belongs to the phosphoglycerate kinase family. As to quaternary structure, monomer.

Its subcellular location is the cytoplasm. It carries out the reaction (2R)-3-phosphoglycerate + ATP = (2R)-3-phospho-glyceroyl phosphate + ADP. It functions in the pathway carbohydrate degradation; glycolysis; pyruvate from D-glyceraldehyde 3-phosphate: step 2/5. This chain is Phosphoglycerate kinase, found in Shewanella halifaxensis (strain HAW-EB4).